Consider the following 433-residue polypeptide: N-lysine methyltransferase SMYD2 (433 aa).

Residues 7–241 form the SET domain; sequence GGLERFCSPG…PGEEVFTSYI (235 aa). 17 to 19 is an S-adenosyl-L-methionine binding site; the sequence is KGR. Zn(2+)-binding residues include C52, C55, C65, C68, C74, C78, H86, and C90. An MYND-type zinc finger spans residues 52 to 90; that stretch reads CEFCFARKEGLSKCGRCKQAFYCNVECQREDWPMHKLEC. Residues H137, 206–207, and 258–260 contribute to the S-adenosyl-L-methionine site; these read NH and YFF.

This sequence belongs to the class V-like SAM-binding methyltransferase superfamily. As to quaternary structure, interacts with RNA polymerase II and HELZ. Interacts with SIN3A and HDAC1. Interacts (via MYND-type zinc finger) with EPB41L3. Interacts (via SET domain) with p53/TP53. Interacts with RB1 and HSP90AA1.

It is found in the cytoplasm. The protein resides in the cytosol. It localises to the nucleus. It carries out the reaction L-lysyl(4)-[histone H3] + 3 S-adenosyl-L-methionine = N(6),N(6),N(6)-trimethyl-L-lysyl(4)-[histone H3] + 3 S-adenosyl-L-homocysteine + 3 H(+). The enzyme catalyses L-lysyl-[protein] + S-adenosyl-L-methionine = N(6)-methyl-L-lysyl-[protein] + S-adenosyl-L-homocysteine + H(+). In terms of biological role, protein-lysine N-methyltransferase that methylates both histones and non-histone proteins, including p53/TP53 and RB1. Specifically trimethylates histone H3 'Lys-4' (H3K4me3) in vivo. The activity requires interaction with HSP90alpha. Shows even higher methyltransferase activity on p53/TP53. Monomethylates 'Lys-370' of p53/TP53, leading to decreased DNA-binding activity and subsequent transcriptional regulation activity of p53/TP53. Monomethylates RB1 at 'Lys-860'. This Bos taurus (Bovine) protein is N-lysine methyltransferase SMYD2 (SMYD2).